Here is a 228-residue protein sequence, read N- to C-terminus: ATP-dependent dethiobiotin synthetase BioD (228 aa).

12 to 17 (EIGKTT) provides a ligand contact to ATP. Residue Thr16 coordinates Mg(2+). Lys37 is a catalytic residue. Position 41 (Ser41) interacts with substrate. ATP-binding positions include Asp54, 116 to 119 (EGAG), and 205 to 207 (PRL). Positions 54 and 116 each coordinate Mg(2+).

Belongs to the dethiobiotin synthetase family. As to quaternary structure, homodimer. Mg(2+) serves as cofactor.

It localises to the cytoplasm. The catalysed reaction is (7R,8S)-7,8-diammoniononanoate + CO2 + ATP = (4R,5S)-dethiobiotin + ADP + phosphate + 3 H(+). The protein operates within cofactor biosynthesis; biotin biosynthesis; biotin from 7,8-diaminononanoate: step 1/2. Functionally, catalyzes a mechanistically unusual reaction, the ATP-dependent insertion of CO2 between the N7 and N8 nitrogen atoms of 7,8-diaminopelargonic acid (DAPA, also called 7,8-diammoniononanoate) to form a ureido ring. The polypeptide is ATP-dependent dethiobiotin synthetase BioD (Pseudomonas paraeruginosa (strain DSM 24068 / PA7) (Pseudomonas aeruginosa (strain PA7))).